Reading from the N-terminus, the 252-residue chain is Gamma carbonic anhydrase-like 1, mitochondrial (252 aa).

A mitochondrion-targeting transit peptide spans 1-29 (MATSIARLSRRGVTSNLIRRCFAAEAALA). Residues 99–101 (RGD) and 114–115 (QE) each bind substrate. H120 contacts Zn(2+). Residues R148, Q160, and Y227 each contribute to the substrate site.

This sequence belongs to the gamma-class carbonic anhydrase family. Component of the mitochondrial oxidoreductase respiratory chain complex I; element of the extra matrix-exposed domain, which is attached to the membrane arm of this complex. Interacts with GAMMACA2.

The protein localises to the mitochondrion membrane. In terms of biological role, involved in complex I assembly in mitochondria and respiration. This chain is Gamma carbonic anhydrase-like 1, mitochondrial (GAMMACAL1), found in Arabidopsis thaliana (Mouse-ear cress).